The sequence spans 310 residues: Malate dehydrogenase (310 aa).

Residues 7 to 12 (GAGNVG) and aspartate 32 contribute to the NAD(+) site. Substrate contacts are provided by arginine 81 and arginine 87. NAD(+)-binding positions include asparagine 94 and 117–119 (VSN). Substrate contacts are provided by asparagine 119 and arginine 150. Residue histidine 174 is the Proton acceptor of the active site.

It belongs to the LDH/MDH superfamily. MDH type 3 family.

It catalyses the reaction (S)-malate + NAD(+) = oxaloacetate + NADH + H(+). Catalyzes the reversible oxidation of malate to oxaloacetate. This Chlorobium limicola (strain DSM 245 / NBRC 103803 / 6330) protein is Malate dehydrogenase.